A 176-amino-acid polypeptide reads, in one-letter code: ATP-dependent protease subunit HslV (176 aa).

Residue T4 is part of the active site. Residues A159, C162, and T165 each coordinate Na(+).

Belongs to the peptidase T1B family. HslV subfamily. A double ring-shaped homohexamer of HslV is capped on each side by a ring-shaped HslU homohexamer. The assembly of the HslU/HslV complex is dependent on binding of ATP.

It is found in the cytoplasm. It carries out the reaction ATP-dependent cleavage of peptide bonds with broad specificity.. Allosterically activated by HslU binding. In terms of biological role, protease subunit of a proteasome-like degradation complex believed to be a general protein degrading machinery. The protein is ATP-dependent protease subunit HslV of Wolbachia sp. subsp. Brugia malayi (strain TRS).